The following is a 272-amino-acid chain: Indole-3-glycerol phosphate synthase (272 aa).

This sequence belongs to the TrpC family.

The catalysed reaction is 1-(2-carboxyphenylamino)-1-deoxy-D-ribulose 5-phosphate + H(+) = (1S,2R)-1-C-(indol-3-yl)glycerol 3-phosphate + CO2 + H2O. Its pathway is amino-acid biosynthesis; L-tryptophan biosynthesis; L-tryptophan from chorismate: step 4/5. In Mycobacterium sp. (strain JLS), this protein is Indole-3-glycerol phosphate synthase.